We begin with the raw amino-acid sequence, 340 residues long: 4-amino-5-hydroxymethyl-2-methylpyrimidine phosphate synthase THI12 (340 aa).

The residue at position 62 (Lys-62) is an N6-(pyridoxal phosphate)lysine. Residue His-66 is part of the active site. Residue 115–118 (GEFG) participates in pyridoxal 5'-phosphate binding. Positions 195 to 199 (CCCFC) match the CCCFC; essential for catalytic activity, may be the site of iron coordination motif.

It belongs to the NMT1/THI5 family. Homodimer. Fe cation is required as a cofactor.

It carries out the reaction N(6)-(pyridoxal phosphate)-L-lysyl-[4-amino-5-hydroxymethyl-2-methylpyrimidine phosphate synthase] + L-histidyl-[4-amino-5-hydroxymethyl-2-methylpyrimidine phosphate synthase] + 2 Fe(3+) + 4 H2O = L-lysyl-[4-amino-5-hydroxymethyl-2-methylpyrimidine phosphate synthase] + (2S)-2-amino-5-hydroxy-4-oxopentanoyl-[4-amino-5-hydroxymethyl-2-methylpyrimidine phosphate synthase] + 4-amino-2-methyl-5-(phosphooxymethyl)pyrimidine + 3-oxopropanoate + 2 Fe(2+) + 2 H(+). The protein operates within cofactor biosynthesis; thiamine diphosphate biosynthesis. Functionally, responsible for the formation of the pyrimidine heterocycle in the thiamine biosynthesis pathway. Catalyzes the formation of hydroxymethylpyrimidine phosphate (HMP-P) from histidine and pyridoxal phosphate (PLP). The protein uses PLP and the active site histidine to form HMP-P, generating an inactive enzyme. The enzyme can only undergo a single turnover, which suggests it is a suicide enzyme. The polypeptide is 4-amino-5-hydroxymethyl-2-methylpyrimidine phosphate synthase THI12 (Saccharomyces cerevisiae (strain ATCC 204508 / S288c) (Baker's yeast)).